The chain runs to 133 residues: Large ribosomal subunit protein uL15 (133 aa).

The disordered stretch occupies residues 1 to 57 (MALEKLTPAAGSTHATKRIGRGQGSGNGKTAGKGNKGQRARKGYNEKRGFEGGQQPL). Residues 21 to 35 (RGQGSGNGKTAGKGN) show a composition bias toward gly residues.

This sequence belongs to the universal ribosomal protein uL15 family. Part of the 50S ribosomal subunit.

Functionally, binds to the 23S rRNA. The sequence is that of Large ribosomal subunit protein uL15 from Campylobacter concisus (strain 13826).